The chain runs to 255 residues: FMR1 neighbor protein (255 aa).

Topologically, residues 1-68 (MSSHRRKAKG…ESLKMRVSKP (68 aa)) are cytoplasmic. Residues 69-89 (FGMLMLSIWILLFVCYYLSYY) traverse the membrane as a helical segment. Residues 90–183 (LCSGSSYFVL…FAPFRDVPKQ (94 aa)) are Extracellular-facing. A P-type domain is found at 125 to 184 (LLNFFFPTTCNLRENQVAKPCNELQDLSESECLRHKCCFSSSGTTSFKCFAPFRDVPKQM). The chain crosses the membrane as a helical span at residues 184–204 (MMQMFGLGAISLILVCLPIYC). The Cytoplasmic portion of the chain corresponds to 205 to 255 (RSLFWRSEPADDLQRQDNRVVTGLKKQRRKRKRKSEMLQKAARGREEHGDE). The segment at 220–255 (QDNRVVTGLKKQRRKRKRKSEMLQKAARGREEHGDE) is disordered. The segment covering 229-238 (KKQRRKRKRK) has biased composition (basic residues).

Testis-specific. Expressed in melanoma, sarcoma, lung, breast, bladder, esophageal and ovarian cancers.

It is found in the membrane. This Homo sapiens (Human) protein is FMR1 neighbor protein.